The following is a 660-amino-acid chain: DNA mismatch repair protein MutL (660 aa).

Disordered regions lie at residues 368 to 426 (PQQT…PTKK) and 439 to 461 (NREQRESTSQVNEQSHTFRSTQQ). Positions 406-417 (SSSSNSTAPSRS) are enriched in low complexity.

This sequence belongs to the DNA mismatch repair MutL/HexB family.

Functionally, this protein is involved in the repair of mismatches in DNA. It is required for dam-dependent methyl-directed DNA mismatch repair. May act as a 'molecular matchmaker', a protein that promotes the formation of a stable complex between two or more DNA-binding proteins in an ATP-dependent manner without itself being part of a final effector complex. The sequence is that of DNA mismatch repair protein MutL from Aliivibrio fischeri (strain ATCC 700601 / ES114) (Vibrio fischeri).